Consider the following 421-residue polypeptide: Gamma-glutamyl phosphate reductase (421 aa).

Belongs to the gamma-glutamyl phosphate reductase family.

It localises to the cytoplasm. It catalyses the reaction L-glutamate 5-semialdehyde + phosphate + NADP(+) = L-glutamyl 5-phosphate + NADPH + H(+). It functions in the pathway amino-acid biosynthesis; L-proline biosynthesis; L-glutamate 5-semialdehyde from L-glutamate: step 2/2. Catalyzes the NADPH-dependent reduction of L-glutamate 5-phosphate into L-glutamate 5-semialdehyde and phosphate. The product spontaneously undergoes cyclization to form 1-pyrroline-5-carboxylate. The polypeptide is Gamma-glutamyl phosphate reductase (Dinoroseobacter shibae (strain DSM 16493 / NCIMB 14021 / DFL 12)).